Consider the following 427-residue polypeptide: F-box protein At2g16450 (427 aa).

The region spanning 1-45 (MNPSPITIDLILEILSRLPAKSVRRFHCVSKRWASIFGSPYFKEL) is the F-box domain.

This is F-box protein At2g16450 from Arabidopsis thaliana (Mouse-ear cress).